A 228-amino-acid chain; its full sequence is Flagellar L-ring protein (228 aa).

The first 17 residues, 1–17 (MHYLRYFAIAFLLLLSS), serve as a signal peptide directing secretion. C18 carries N-palmitoyl cysteine lipidation. C18 carries the S-diacylglycerol cysteine lipid modification.

Belongs to the FlgH family. The basal body constitutes a major portion of the flagellar organelle and consists of four rings (L,P,S, and M) mounted on a central rod.

Its subcellular location is the cell membrane. The protein localises to the bacterial flagellum basal body. Functionally, assembles around the rod to form the L-ring and probably protects the motor/basal body from shearing forces during rotation. The protein is Flagellar L-ring protein of Wigglesworthia glossinidia brevipalpis.